The chain runs to 681 residues: DNA-directed RNA polymerase subunit beta' (681 aa).

4 residues coordinate Zn(2+): C69, C71, C87, and C90. 3 residues coordinate Mg(2+): D489, D491, and D493.

It belongs to the RNA polymerase beta' chain family. RpoC1 subfamily. In terms of assembly, in plastids the minimal PEP RNA polymerase catalytic core is composed of four subunits: alpha, beta, beta', and beta''. When a (nuclear-encoded) sigma factor is associated with the core the holoenzyme is formed, which can initiate transcription. The cofactor is Mg(2+). Zn(2+) serves as cofactor.

It is found in the plastid. Its subcellular location is the chloroplast. The catalysed reaction is RNA(n) + a ribonucleoside 5'-triphosphate = RNA(n+1) + diphosphate. Functionally, DNA-dependent RNA polymerase catalyzes the transcription of DNA into RNA using the four ribonucleoside triphosphates as substrates. The protein is DNA-directed RNA polymerase subunit beta' of Solanum bulbocastanum (Wild potato).